Consider the following 122-residue polypeptide: Large ribosomal subunit protein uL14 (122 aa).

It belongs to the universal ribosomal protein uL14 family. As to quaternary structure, part of the 50S ribosomal subunit. Forms a cluster with proteins L3 and L19. In the 70S ribosome, L14 and L19 interact and together make contacts with the 16S rRNA in bridges B5 and B8.

Binds to 23S rRNA. Forms part of two intersubunit bridges in the 70S ribosome. This chain is Large ribosomal subunit protein uL14, found in Halalkalibacterium halodurans (strain ATCC BAA-125 / DSM 18197 / FERM 7344 / JCM 9153 / C-125) (Bacillus halodurans).